Consider the following 196-residue polypeptide: Pyridoxal 5'-phosphate synthase subunit PdxT (196 aa).

An L-glutamine-binding site is contributed by 56 to 58 (GES). Cysteine 85 acts as the Nucleophile in catalysis. Residues arginine 113 and 141–142 (IR) each bind L-glutamine. Residues histidine 177 and glutamate 179 each act as charge relay system in the active site.

The protein belongs to the glutaminase PdxT/SNO family. In the presence of PdxS, forms a dodecamer of heterodimers. Only shows activity in the heterodimer.

It catalyses the reaction aldehydo-D-ribose 5-phosphate + D-glyceraldehyde 3-phosphate + L-glutamine = pyridoxal 5'-phosphate + L-glutamate + phosphate + 3 H2O + H(+). It carries out the reaction L-glutamine + H2O = L-glutamate + NH4(+). It participates in cofactor biosynthesis; pyridoxal 5'-phosphate biosynthesis. Its function is as follows. Catalyzes the hydrolysis of glutamine to glutamate and ammonia as part of the biosynthesis of pyridoxal 5'-phosphate. The resulting ammonia molecule is channeled to the active site of PdxS. This Methanospirillum hungatei JF-1 (strain ATCC 27890 / DSM 864 / NBRC 100397 / JF-1) protein is Pyridoxal 5'-phosphate synthase subunit PdxT.